We begin with the raw amino-acid sequence, 119 residues long: Ribonuclease P protein component (119 aa).

Belongs to the RnpA family. In terms of assembly, consists of a catalytic RNA component (M1 or rnpB) and a protein subunit.

It catalyses the reaction Endonucleolytic cleavage of RNA, removing 5'-extranucleotides from tRNA precursor.. Functionally, RNaseP catalyzes the removal of the 5'-leader sequence from pre-tRNA to produce the mature 5'-terminus. It can also cleave other RNA substrates such as 4.5S RNA. The protein component plays an auxiliary but essential role in vivo by binding to the 5'-leader sequence and broadening the substrate specificity of the ribozyme. The sequence is that of Ribonuclease P protein component from Listeria welshimeri serovar 6b (strain ATCC 35897 / DSM 20650 / CCUG 15529 / CIP 8149 / NCTC 11857 / SLCC 5334 / V8).